We begin with the raw amino-acid sequence, 394 residues long: Actin-related protein 2-B (394 aa).

ATP contacts are provided by residues 160-162, 214-218, and 305-310; these read GDG, RMMKE, and GGSTMY.

This sequence belongs to the actin family. ARP2 subfamily. Component of the Arp2/3 complex composed of actr2/arp2, actr3/arp3, arpc1b, arpc2, arpc3, arpc4 and arpc5.

It localises to the cytoplasm. The protein localises to the cytoskeleton. The protein resides in the cell projection. Its subcellular location is the nucleus. Its function is as follows. ATP-binding component of the Arp2/3 complex, a multiprotein complex that mediates actin polymerization upon stimulation by nucleation-promoting factor (NPF). The Arp2/3 complex mediates the formation of branched actin networks in the cytoplasm, providing the force for cell motility. Seems to contact the pointed end of the daughter actin filament. In addition to its role in the cytoplasmic cytoskeleton, the Arp2/3 complex also promotes actin polymerization in the nucleus, thereby regulating gene transcription and repair of damaged DNA. The Arp2/3 complex promotes homologous recombination (HR) repair in response to DNA damage by promoting nuclear actin polymerization, leading to drive motility of double-strand breaks (DSBs). The chain is Actin-related protein 2-B (actr2b) from Danio rerio (Zebrafish).